The sequence spans 543 residues: Heparanase-like protein 1 (543 aa).

The N-terminal stretch at 1–24 is a signal peptide; the sequence is MGFRVCVIVVFLGCLLLVPEKTMA. N-linked (GlcNAc...) asparagine glycosylation is present at Asn184. Catalysis depends on Glu201, which acts as the Proton donor. N-linked (GlcNAc...) asparagine glycosylation occurs at Asn304. Glu320 (nucleophile) is an active-site residue. N-linked (GlcNAc...) asparagine glycans are attached at residues Asn425 and Asn428.

Belongs to the glycosyl hydrolase 79 family.

The protein localises to the lysosome membrane. It is found in the secreted. Functionally, endoglycosidase which is a cell surface and extracellular matrix-degrading enzyme. Cleaves heparan sulfate proteoglycans (HSPGs) into heparan sulfate side chains and core proteoglycans. The polypeptide is Heparanase-like protein 1 (Arabidopsis thaliana (Mouse-ear cress)).